Here is a 750-residue protein sequence, read N- to C-terminus: Catalase A (750 aa).

Residues 30 to 49 (ERDTADAHTQQPLTTDHGVR) form a disordered region. Catalysis depends on residues histidine 93 and asparagine 166. Tyrosine 380 contacts heme.

It belongs to the catalase family. The cofactor is heme.

The protein localises to the peroxisome matrix. It catalyses the reaction 2 H2O2 = O2 + 2 H2O. Functionally, catalyzes the degradation of hydrogen peroxide (H(2)O(2)) generated by peroxisomal oxidases to water and oxygen, thereby protecting cells from the toxic effects of hydrogen peroxide. This chain is Catalase A (catA), found in Aspergillus fumigatus (strain ATCC MYA-4609 / CBS 101355 / FGSC A1100 / Af293) (Neosartorya fumigata).